Reading from the N-terminus, the 203-residue chain is ADP-ribosylation factor-like protein 6-interacting protein 1 (203 aa).

Residues 1 to 41 (MAEGDNRSSNLLAAETASLEEQLQGWGEVMLMADKVLRWER) lie on the Cytoplasmic side of the membrane. The helical transmembrane segment at 42–62 (AWFPPAIMGVVSLVFLIIYYL) threads the bilayer. Over 63 to 65 (DPS) the chain is Lumenal. The chain crosses the membrane as a helical span at residues 66-86 (VLSGVSCFVMFLCLADYLVPI). Residues 87–133 (LAPRIFGSNKWTTEQQQRFHEICSNLVKTRRRAVGWWKRLFTLKEEK) lie on the Cytoplasmic side of the membrane. A helical membrane pass occupies residues 134–175 (PKMYFMTMIVSLAAVAWVGQQVHNLLLTYLIVTSLLLLPGLN). Residues 176–203 (QHGIISKYIGMAKREINKLLKQKEKKNE) are Lumenal-facing.

It belongs to the ARL6ip family. As to quaternary structure, homooligomer. Heterodimer with ARL6IP5. Interacts with ATL1, TMEM33 and ARL6.

The protein resides in the endomembrane system. Its subcellular location is the endoplasmic reticulum membrane. The protein localises to the endoplasmic reticulum. Positively regulates SLC1A1/EAAC1-mediated glutamate transport by increasing its affinity for glutamate in a PKC activity-dependent manner. Promotes the catalytic efficiency of SLC1A1/EAAC1 probably by reducing its interaction with ARL6IP5, a negative regulator of SLC1A1/EAAC1-mediated glutamate transport. Plays a role in the formation and stabilization of endoplasmic reticulum tubules. Negatively regulates apoptosis, possibly by modulating the activity of caspase-9 (CASP9). Inhibits cleavage of CASP9-dependent substrates and downstream markers of apoptosis but not CASP9 itself. May be involved in protein transport, membrane trafficking, or cell signaling during hematopoietic maturation. This chain is ADP-ribosylation factor-like protein 6-interacting protein 1 (ARL6IP1), found in Pongo abelii (Sumatran orangutan).